The chain runs to 269 residues: Iron(3+)-hydroxamate import ATP-binding protein FhuC (269 aa).

The 237-residue stretch at 4–240 (LSTEQLGIGY…DILKQVFQID (237 aa)) folds into the ABC transporter domain. Residues 36 to 43 (GPNGCGKS) and 160 to 171 (LLLLDEPTTYLD) contribute to the ATP site.

It belongs to the ABC transporter superfamily. Iron (Fe3+)-hydroxamate importer (TC 3.A.1.14.7) family. The complex is composed of an ATP-binding protein (FhuC), two transmembrane proteins (FhuB and FhuG) and a solute-binding protein (FhuD or YxeB).

It is found in the cell membrane. It catalyses the reaction ATP + H2O + Fe(3+)-hydroxamate complex-[hydroxamate-binding protein]Side 1 = ADP + phosphate + Fe(3+)-hydroxamate complexSide 2 + [hydroxamate-binding protein]Side 1.. Part of the ABC transporter complex FhuBGCD involved in iron(3+)-hydroxamate import. Responsible for energy coupling to the transport system. The polypeptide is Iron(3+)-hydroxamate import ATP-binding protein FhuC (fhuC) (Bacillus subtilis (strain 168)).